Consider the following 760-residue polypeptide: Serine/threonine-protein kinase dkf-1 (760 aa).

Phorbol-ester/DAG-type zinc fingers lie at residues 103–153 and 194–244; these read PHVV…GIIV and PHTL…PSNC. One can recognise a PH domain in the interval 316-444; that stretch reads KNLEGWMIHF…QFIKESLQPP (129 aa). The 262-residue stretch at 464 to 725 folds into the Protein kinase domain; sequence VLSDKTLGSG…IEKCLEHGWL (262 aa). ATP is bound by residues 470-478 and K493; that span reads LGSGQFGTV. Residue D589 is the Proton acceptor of the active site. T626 carries the post-translational modification Phosphothreonine.

The protein belongs to the protein kinase superfamily. CAMK Ser/Thr protein kinase family. PKD subfamily. Requires Mg(2+) as cofactor. Prolonged phosphorylation at Thr-626 results in ubiquitination and degradation.

The protein resides in the cytoplasm. Its subcellular location is the membrane. The enzyme catalyses L-seryl-[protein] + ATP = O-phospho-L-seryl-[protein] + ADP + H(+). It carries out the reaction L-threonyl-[protein] + ATP = O-phospho-L-threonyl-[protein] + ADP + H(+). With respect to regulation, activated by DAG and phorbol esters. Phorbol-ester/DAG-type domain 1 binds phorbol ester with high affinity and mediates accumulation at the cell periphery. Phorbol-ester/DAG-type domain 2 binds phorbol ester with low affinity but may mediate initial contact, resulting in a conformational change allowing previously occluded domain 1 to anchor the kinase. Phosphorylation on Thr-626 is then also required for activation and may also result in a further conformational change. Converts transient diacylglycerol (DAG) signals into prolonged physiological effects, independently of PKC. Role in the regulation of growth and neuromuscular control of movement. Involved in immune response to S.aureus bacterium by activating transcription factor hlh-30 downstream of phospholipase plc-1. This chain is Serine/threonine-protein kinase dkf-1, found in Caenorhabditis briggsae.